The chain runs to 335 residues: Nucleoid-associated protein PC1_1634 (335 aa).

Belongs to the YejK family.

Its subcellular location is the cytoplasm. It is found in the nucleoid. The protein is Nucleoid-associated protein PC1_1634 of Pectobacterium carotovorum subsp. carotovorum (strain PC1).